A 675-amino-acid polypeptide reads, in one-letter code: Acetyl-coenzyme A synthetase 1 (675 aa).

Residues 1 to 10 (MPESTQQSHL) show a composition bias toward polar residues. The segment at 1–32 (MPESTQQSHLSLDHEKMQQPPKGFTERSKTKP) is disordered. CoA contacts are provided by residues 212–215 (RGGK) and Thr-331. Residues 407–409 (GEP), 431–436 (DTYWQT), Asp-522, and Arg-537 each bind ATP. A CoA-binding site is contributed by Ser-545. Residue Arg-548 participates in ATP binding. CoA is bound at residue Arg-609.

It belongs to the ATP-dependent AMP-binding enzyme family.

It catalyses the reaction acetate + ATP + CoA = acetyl-CoA + AMP + diphosphate. This chain is Acetyl-coenzyme A synthetase 1 (ACS1), found in Candida albicans (Yeast).